A 334-amino-acid chain; its full sequence is MAAPENTLHSTDSPLKRQREDEVNGVSDTLSKEPQPNGLSSVIPGWFSEISPMWPGEAHSLKVEKILFQGKSDYQDVMVFQSATYGKVLILDGVIQLTERDECAYQEMITHLPLCSIPNPKKVLVIGGGDGGVLREVARHSSVEKIDICEIDKMVVDVSKEYFPDIAVGFADPRVTLNIGDGVAFLKAAPEGTYDAVIVDSSDPIGPAQELFEKPFFESVARALRPGGVVCTQAESIWLHMHIIEDIVVNCRQVFKGSVNYAWTTVPTYPSGMIGFMLCSTEGPSVDFKHPVNPIDENDSQQAARPLKFYNREIHSAAFCLPSFAKRAIASKEN.

The interval 1–37 (MAAPENTLHSTDSPLKRQREDEVNGVSDTLSKEPQPN) is disordered. Residues 26 to 37 (VSDTLSKEPQPN) are compositionally biased toward polar residues. One can recognise a PABS domain in the interval 44 to 281 (PGWFSEISPM…GMIGFMLCST (238 aa)). Residue glutamine 75 participates in S-adenosyl 3-(methylsulfanyl)propylamine binding. A putrescine-binding site is contributed by tyrosine 105. S-adenosyl 3-(methylsulfanyl)propylamine is bound by residues glutamine 106, aspartate 130, glutamate 150, 181 to 182 (DG), and aspartate 200. The Proton acceptor role is filled by aspartate 200. Putrescine contacts are provided by residues 200–203 (DSSD) and tyrosine 269.

This sequence belongs to the spermidine/spermine synthase family.

It carries out the reaction S-adenosyl 3-(methylsulfanyl)propylamine + putrescine = S-methyl-5'-thioadenosine + spermidine + H(+). Its pathway is amine and polyamine biosynthesis; spermidine biosynthesis; spermidine from putrescine: step 1/1. The chain is Spermidine synthase 1 (SPDSYN1) from Pisum sativum (Garden pea).